Consider the following 513-residue polypeptide: GMP synthase [glutamine-hydrolyzing] (513 aa).

One can recognise a Glutamine amidotransferase type-1 domain in the interval 9-198 (LILVLDFGSQ…VRRVCECKGQ (190 aa)). C86 (nucleophile) is an active-site residue. Catalysis depends on residues H172 and E174. The GMPS ATP-PPase domain maps to 199 to 388 (WTMENFIEIE…LGIPEHLVWR (190 aa)). 226-232 (SGGVDSS) serves as a coordination point for ATP.

As to quaternary structure, homodimer.

The catalysed reaction is XMP + L-glutamine + ATP + H2O = GMP + L-glutamate + AMP + diphosphate + 2 H(+). It functions in the pathway purine metabolism; GMP biosynthesis; GMP from XMP (L-Gln route): step 1/1. Its function is as follows. Catalyzes the synthesis of GMP from XMP. This is GMP synthase [glutamine-hydrolyzing] from Staphylococcus aureus (strain MSSA476).